The primary structure comprises 325 residues: Glycerol-3-phosphate dehydrogenase [NAD(P)+] (325 aa).

Trp15, Arg35, and Lys107 together coordinate NADPH. Residues Lys107, Gly135, and Ser137 each coordinate sn-glycerol 3-phosphate. Ala139 lines the NADPH pocket. Residues Lys190, Asp243, Ser253, Arg254, and Asn255 each contribute to the sn-glycerol 3-phosphate site. The Proton acceptor role is filled by Lys190. Arg254 contributes to the NADPH binding site. The NADPH site is built by Leu272 and Glu274.

Belongs to the NAD-dependent glycerol-3-phosphate dehydrogenase family.

Its subcellular location is the cytoplasm. The enzyme catalyses sn-glycerol 3-phosphate + NAD(+) = dihydroxyacetone phosphate + NADH + H(+). It carries out the reaction sn-glycerol 3-phosphate + NADP(+) = dihydroxyacetone phosphate + NADPH + H(+). It functions in the pathway membrane lipid metabolism; glycerophospholipid metabolism. Functionally, catalyzes the reduction of the glycolytic intermediate dihydroxyacetone phosphate (DHAP) to sn-glycerol 3-phosphate (G3P), the key precursor for phospholipid synthesis. The sequence is that of Glycerol-3-phosphate dehydrogenase [NAD(P)+] from Afipia carboxidovorans (strain ATCC 49405 / DSM 1227 / KCTC 32145 / OM5) (Oligotropha carboxidovorans).